A 1137-amino-acid chain; its full sequence is AP-4 complex subunit epsilon-1 (1137 aa).

S700 and S857 each carry phosphoserine. Residues 727 to 1137 (SGALPVPQES…YQCQKVMEGS (411 aa)) are interaction with TEPSIN.

The protein belongs to the adaptor complexes large subunit family. Adaptor protein complex 4 (AP-4) is a heterotetramer composed of two large adaptins (epsilon-type subunit AP4E1 and beta-type subunit AP4B1), a medium adaptin (mu-type subunit AP4M1) and a small adaptin (sigma-type AP4S1). Interacts with TEPSIN. Interacts with GRIA2; probably indirect it mediates the somatodendritic localization of GRIA2 in neurons. As to expression, widely expressed.

The protein resides in the golgi apparatus. It is found in the trans-Golgi network membrane. Component of the adaptor protein complex 4 (AP-4). Adaptor protein complexes are vesicle coat components involved both in vesicle formation and cargo selection. They control the vesicular transport of proteins in different trafficking pathways. AP-4 forms a non clathrin-associated coat on vesicles departing the trans-Golgi network (TGN) and may be involved in the targeting of proteins from the trans-Golgi network (TGN) to the endosomal-lysosomal system. It is also involved in protein sorting to the basolateral membrane in epithelial cells and the proper asymmetric localization of somatodendritic proteins in neurons. AP-4 is involved in the recognition and binding of tyrosine-based sorting signals found in the cytoplasmic part of cargos, but may also recognize other types of sorting signal. This Homo sapiens (Human) protein is AP-4 complex subunit epsilon-1.